Here is a 363-residue protein sequence, read N- to C-terminus: uncharacterized protein (363 aa).

A coiled-coil region spans residues 109-329 (RAALRELRSR…VEELQAQTRE (221 aa)).

This is an uncharacterized protein from Homo sapiens (Human).